The chain runs to 120 residues: Large ribosomal subunit protein uL18 (120 aa).

This sequence belongs to the universal ribosomal protein uL18 family. As to quaternary structure, part of the 50S ribosomal subunit; part of the 5S rRNA/L5/L18/L25 subcomplex. Contacts the 5S and 23S rRNAs.

Its function is as follows. This is one of the proteins that bind and probably mediate the attachment of the 5S RNA into the large ribosomal subunit, where it forms part of the central protuberance. The sequence is that of Large ribosomal subunit protein uL18 from Azorhizobium caulinodans (strain ATCC 43989 / DSM 5975 / JCM 20966 / LMG 6465 / NBRC 14845 / NCIMB 13405 / ORS 571).